The following is a 138-amino-acid chain: Large ribosomal subunit protein uL16 (138 aa).

The disordered stretch occupies residues 1–22 (MQQPARTKYRKQQKGRNKGIAT). Basic residues predominate over residues 7–17 (TKYRKQQKGRN).

It belongs to the universal ribosomal protein uL16 family. As to quaternary structure, part of the 50S ribosomal subunit.

Functionally, binds 23S rRNA and is also seen to make contacts with the A and possibly P site tRNAs. The sequence is that of Large ribosomal subunit protein uL16 from Nitrosospira multiformis (strain ATCC 25196 / NCIMB 11849 / C 71).